A 76-amino-acid chain; its full sequence is Virulence-associated protein VagC (76 aa).

The region spanning 4 to 45 (VSIFKNGNNRAIRLPRDLDFEGVSELEIVREGDSIILRPVRP) is the SpoVT-AbrB domain.

It belongs to the VapB family.

This Salmonella dublin protein is Virulence-associated protein VagC (vagC).